The sequence spans 308 residues: Transcriptional adapter 1-2 (308 aa).

This sequence belongs to the TADA1 family. As to quaternary structure, component of the Spt-Ada-Gcn5 acetyltransferase (SAGA) complex consisting of wda/Taf5L, Saf6, Taf9, Taf10b, Taf12, Ada1, Spt3, Spt7, Spt20, Sf3b3, Sf3b5, Nipped-A/Tra1, a histone acetyltransferase (HAT) module made up of Gcn5, Ada2b (Isoform B), Ada3 and Sgf29, and a deubiquitinase (DUB) module made up of not/nonstop, Sgf11 and e(y)2 tethered to SAGA by Atxn7. Not a component of the Ada2a-containing ATAC complex.

It is found in the nucleus. In terms of biological role, component of the transcription regulatory complex SAGA, a multiprotein complex that activates transcription by remodeling chromatin and mediating histone acetylation and deubiquitination. The SAGA complex predominantly acetylates histone H3. This Drosophila melanogaster (Fruit fly) protein is Transcriptional adapter 1-2.